Reading from the N-terminus, the 2545-residue chain is Methylphloroacetophenone synthase (2545 aa).

Residues 8–261 (AFGALAPWPA…HVAIHEGIPQ (254 aa)) are N-terminal acylcarrier protein transacylase (SAT) domain. In terms of domain architecture, Ketosynthase family 3 (KS3) spans 383–798 (KDAIAIIGMG…GSNAAMIVLE (416 aa)). Catalysis depends on for beta-ketoacyl synthase activity residues cysteine 547, histidine 682, and histidine 721. Residues 914–1218 (LCFGGQVSDR…VSLQLNKPNS (305 aa)) form a malonyl-CoA:ACP transacylase (MAT) domain region. Serine 1001 functions as the For acyl/malonyl transferase activity in the catalytic mechanism. The tract at residues 1293–1423 (LPAVLIRLKS…GTVNLKVADD (131 aa)) is N-terminal hotdog fold. In terms of domain architecture, PKS/mFAS DH spans 1293–1605 (LPAVLIRLKS…FTDIRRPVPI (313 aa)). The segment at 1296–1604 (VLIRLKSFDS…NFTDIRRPVP (309 aa)) is product template (PT) domain. Residues 1449–1605 (RSESLRGNVL…FTDIRRPVPI (157 aa)) form a C-terminal hotdog fold region. One can recognise a Carrier domain in the interval 1657 to 1731 (TSIYEDICGL…SLVDYLHGKG (75 aa)). Serine 1691 carries the O-(pantetheine 4'-phosphoryl)serine modification. The span at 1748–1768 (SSSHAISTGASSPPDSSGASA) shows a compositional bias: low complexity. Positions 1748–1773 (SSSHAISTGASSPPDSSGASAMTTPP) are disordered. The interval 1931 to 2163 (FGASETKLLN…GFKHVSWTDG (233 aa)) is methyltransferase (CMeT) domain. Residues 2198–2544 (AGVPMEEVVW…YDFICRQLGM (347 aa)) are claisen cyclase (CLC) domain. Catalysis depends on for thioesterase activity residues serine 2321, aspartate 2481, and histidine 2513.

In terms of biological role, methylphloroacetophenone synthase; part of the gene cluster that mediates the biosynthesis of usnic acid, a dibenzofuran lichen product possessing a broad spectrum of biological activities. Two genes, mpas and mpao, comprise the usnic acid biosynthetic gene cluster with a single post-PKS enzyme, the methylphloracetophenone oxidase (mpao). The methylphloroacetophenone synthase (mpas) is a non-reducing polyketide synthase that produces methylphloracetophenone from acetate via a methylated tetraketide intermediate. The methylphloroacetophenone oxidase then carries out the oxidative dimerization of methylphloracetophenone to usnic acid. This Cladonia uncialis (Cup lichen) protein is Methylphloroacetophenone synthase.